The chain runs to 256 residues: ATP synthase subunit a (256 aa).

The next 6 membrane-spanning stretches (helical) occupy residues 33-53, 92-112, 122-142, 148-168, 191-211, and 235-255; these read ITTF…LTLL, YFPL…IGMI, MVFI…IGLY, FFAL…LVLI, GHLL…VSIV, and MIQS…GLYL.

It belongs to the ATPase A chain family. As to quaternary structure, F-type ATPases have 2 components, CF(1) - the catalytic core - and CF(0) - the membrane proton channel. CF(1) has five subunits: alpha(3), beta(3), gamma(1), delta(1), epsilon(1). CF(0) has three main subunits: a, b and c.

The protein localises to the mitochondrion inner membrane. Functionally, mitochondrial membrane ATP synthase (F(1)F(0) ATP synthase or Complex V) produces ATP from ADP in the presence of a proton gradient across the membrane which is generated by electron transport complexes of the respiratory chain. F-type ATPases consist of two structural domains, F(1) - containing the extramembraneous catalytic core and F(0) - containing the membrane proton channel, linked together by a central stalk and a peripheral stalk. During catalysis, ATP synthesis in the catalytic domain of F(1) is coupled via a rotary mechanism of the central stalk subunits to proton translocation. Key component of the proton channel; it may play a direct role in the translocation of protons across the membrane. The polypeptide is ATP synthase subunit a (ATP6) (Wickerhamomyces canadensis (Yeast)).